Reading from the N-terminus, the 253-residue chain is PAXIP1-associated glutamate-rich protein 1 (253 aa).

Disordered regions lie at residues 1 to 109 (MSLV…MPPP) and 128 to 253 (QAEI…QRKY). Positions 51–62 (EGGREEAEHEGS) are enriched in basic and acidic residues. The interval 116-160 (YELLAAHGTLELQAEILPRRPPTPEAQSEEERSDEEPEAKEEEEE) is sufficient for interaction with NCOA1. Threonine 138 carries the post-translational modification Phosphothreonine. A compositionally biased stretch (acidic residues) spans 142–159 (QSEEERSDEEPEAKEEEE). Residues serine 143 and serine 148 each carry the phosphoserine modification. The interval 161 to 253 (KPHMPTEFDF…GSLFPRQRKY (93 aa)) is sufficient for interaction with ESR1. Basic and acidic residues predominate over residues 195–223 (QKREARLDKVLSDMKRHKKLEEQILRTGR). Serine 237 bears the Phosphoserine mark.

Component of the KMT2 family MLL2/MLL3 complex, at least composed of the histone methyltransferases KMT2D and/or KMT2C, the common complex subunits ASH2L, RBBP5, WDR5 and DPY30, and the complex type-specific subunits PAXIP1/PTIP, PAGR1, NCOA6 and KDM6A; PAXIP1 is required for the association with the MLL2/MLL3 complex. Forms a constitutive complex with PAXIP1/PTIP independently of the MLL2/MLL3 complex. Interacts with NCOA1, ESR1, NR3C1, AR.

The protein localises to the nucleus. Its function is as follows. Its association with the histone methyltransferase MLL2/MLL3 complex is suggesting a role in epigenetic transcriptional activation. However, in association with PAXIP1/PTIP is proposed to function at least in part independently of the MLL2/MLL3 complex. Proposed to be recruited by PAXIP1 to sites of DNA damage where the PAGR1:PAXIP1 complex is required for cell survival in response to DNA damage independently of the MLL2/MLL3 complex. However, its function in DNA damage has been questioned. During immunoglobulin class switching in activated B-cells is involved in transcription regulation of downstream switch regions at the immunoglobulin heavy-chain (Igh) locus independently of the MLL2/MLL3 complex. Involved in both estrogen receptor-regulated gene transcription and estrogen-stimulated G1/S cell-cycle transition. Acts as a transcriptional cofactor for nuclear hormone receptors. Inhibits the induction properties of several steroid receptors such as NR3C1, AR and PPARG; the mechanism of inhibition appears to be gene-dependent. The protein is PAXIP1-associated glutamate-rich protein 1 (PAGR1) of Bos taurus (Bovine).